The following is a 114-amino-acid chain: MSFKTRAVAESTYYIKSGAYYLAVTPERQIITQNTVYAWEVSIEGEYNYLKDPGTTHYLTDNGGQNLLNPRSDVDGKWGGGSEDQATQLINAETEKPLSVPYGQPFQTWLFVKV.

The propeptide occupies 1 to 6 (MSFKTR).

It is found in the secreted. The protein resides in the cell wall. Its function is as follows. May play a role in the structure of the hypha-forming fruit bodies. This is 11.9 kDa wall protein (TDF-1) from Tuber dryophilum (Truffle).